The chain runs to 133 residues: MASRKATVQSIVESFNERDIDKMTAPVSKNFVYQLLPKSLERGPMDVAGFRGLFEATKSYFNNFKFEVVDTFEDSAADKMILWANVTSDTHVGKFATEVMLIFYFDTTGKIYKWIEWIDSAVGKEFEQKLQGQ.

Its pathway is mycotoxin biosynthesis. Its function is as follows. Part of the core atranone cluster (CAC) which products are predicted to catalyze most or all steps of mycotoxin atranone synthesis, starting from geranylgeranyl pyrophosphate (GGPP). The initial cyclization of GGPP to dolabellane is probably performed by the terpene cyclase ATR13. The Baeyer-Villiger oxidation near the end of the atranone synthesis, which converts atranones D and E to atranones F and G is predicted to be catalyzed by the monooxygenase ATR8. Of the CAC's other predicted gene products, the reducing PKS ATR6 might synthesize a polyketide chain. This polyketide is probably transferred onto the atranone backbone by the polyketide transferase ATR5. Other predicted CAC products include 4 oxygenases (ATR2, ATR3, ATR4, and ATR14), 3 short-chain reductases (ATR7, ATR9, and ATR10), and a methyltransferase (ATR12). These may all be involved in the various steps of atranone biosynthesis, although their specific roles must await experimental determination. This chain is Core atranone cluster (CAC) protein 11, found in Stachybotrys chlorohalonatus (strain IBT 40285).